Reading from the N-terminus, the 90-residue chain is Small ribosomal subunit protein bS16 (90 aa).

Belongs to the bacterial ribosomal protein bS16 family.

The chain is Small ribosomal subunit protein bS16 from Anoxybacillus flavithermus (strain DSM 21510 / WK1).